We begin with the raw amino-acid sequence, 449 residues long: MKTLLLLVGLLLTLENGQVLGDKAVSDRELQEMSTQGSNYINKEIKNALKGVKQIKNLIEQTNEERKSLLGTLEEAKKKKEGALNDTKDSEMKLKESQGVCNETMTALWEECKPCLKQTCMKFYARVCRSGSGLVGHQLEEFLNQSSPFYFWINGDRIDSLLENDRQQTHVLDVMQDSFDRASSIMDELFQDRFFTREPQDTYYYSPFSSPHRRSSLLFNPKSRFARNIMHFPMYRHLNFNDMFQPFFDMIHQAQQAMNLHLHRLPDQLPMTEFSEGDNHDRTVCKEIRHNSTGCLKMKDQCEKCQEILSVDCSTNNPSQMQLRQELNNSLQLAEKFTKLYDELLQSYQEKMLNTSSLLKQLNEQFSWVSQLANLTQGEDQYYLQVTTVSSHNSDSEVPSGLTRVVVKLFDSYPITVTVPEVVSRNNPKFMETVAEKALQEYRQKNREE.

Residues 1 to 21 (MKTLLLLVGLLLTLENGQVLG) form the signal peptide. The Nuclear localization signal signature appears at 77–80 (KKKK). 2 N-linked (GlcNAc...) asparagine glycosylation sites follow: Asn-85 and Asn-102. 5 disulfides stabilise this stretch: Cys-101/Cys-313, Cys-112/Cys-305, Cys-115/Cys-302, Cys-120/Cys-295, and Cys-128/Cys-285. Ser-132 carries the phosphoserine modification. N-linked (GlcNAc...) asparagine glycosylation is found at Asn-144, Asn-291, Asn-328, Asn-354, and Asn-374. Position 396 is a phosphoserine (Ser-396). Positions 443 to 447 (RQKNR) match the Nuclear localization signal motif.

This sequence belongs to the clusterin family. As to quaternary structure, antiparallel disulfide-linked heterodimer of an alpha chain and a beta chain. Self-associates and forms higher oligomers. Interacts with a broad range of misfolded proteins, including APP, APOC2 and LYZ. Slightly acidic pH promotes interaction with misfolded proteins. Forms high-molecular weight oligomers upon interaction with misfolded proteins. Interacts with APOA1, LRP2, CLUAP1 and PON1. Interacts with the complement membrane attack complex. Interacts (via alpha chain) with XRCC6. Interacts with SYVN1, COMMD1, BTRC, CUL1 and with ubiquitin and SCF (SKP1-CUL1-F-box protein) E3 ubiquitin-protein ligase complexes. Interacts (via alpha chain) with BAX in stressed cells, where BAX undergoes a conformation change leading to association with the mitochondrial membrane. Does not interact with BAX in unstressed cells. Found in a complex with LTF, CLU, EPPIN and SEMG1. Interacts (immaturely glycosylated pre-secreted form) with HSPA5; this interaction promotes CLU stability and facilitates stress-induced CLU retrotranslocation from the secretory pathway to the mitochondria, thereby reducing stress-induced apoptosis by stabilizing mitochondrial membrane integrity. Interacts with BCL2L1; this interaction releases and activates BAX and promotes cell death. Interacts with TGFBR2 and ACVR1. Interacts (secreted form) with STMN3; this interaction may act as an important modulator during neuronal differentiation. Interacts with VLDLR and LRP8. Proteolytically cleaved on its way through the secretory system, probably within the Golgi lumen. Proteolytic cleavage is not necessary for its chaperone activity. All non-secreted forms are not proteolytically cleaved. Chaperone activity of uncleaved forms is dependent on a non-reducing environment. Post-translationally, polyubiquitinated, leading to proteasomal degradation. Under cellular stress, the intracellular level of cleaved form is reduced due to proteasomal degradation. In terms of processing, heavily N-glycosylated. About 30% of the protein mass is comprised of complex N-linked carbohydrate. Endoplasmic reticulum (ER) stress induces changes in glycosylation status and increases level of hypoglycosylated forms. Core carbohydrates are essential for chaperone activity. Non-secreted forms are hypoglycosylated or unglycosylated.

It is found in the secreted. It localises to the nucleus. Its subcellular location is the cytoplasm. The protein resides in the mitochondrion membrane. The protein localises to the cytosol. It is found in the microsome. It localises to the endoplasmic reticulum. Its subcellular location is the mitochondrion. The protein resides in the perinuclear region. The protein localises to the cytoplasmic vesicle. It is found in the secretory vesicle. It localises to the chromaffin granule. Functions as extracellular chaperone that prevents aggregation of non native proteins. Prevents stress-induced aggregation of blood plasma proteins. Inhibits formation of amyloid fibrils by APP, APOC2, B2M, CALCA, CSN3, SNCA and aggregation-prone LYZ variants (in vitro). Does not require ATP. Maintains partially unfolded proteins in a state appropriate for subsequent refolding by other chaperones, such as HSPA8/HSC70. Does not refold proteins by itself. Binding to cell surface receptors triggers internalization of the chaperone-client complex and subsequent lysosomal or proteasomal degradation. When secreted, protects cells against apoptosis and against cytolysis by complement: inhibits assembly of the complement membrane attack complex (MAC) by preventing polymerization of C9 pore component of the MAC complex. Intracellular forms interact with ubiquitin and SCF (SKP1-CUL1-F-box protein) E3 ubiquitin-protein ligase complexes and promote the ubiquitination and subsequent proteasomal degradation of target proteins. Promotes proteasomal degradation of COMMD1 and IKBKB. Modulates NF-kappa-B transcriptional activity. Following stress, promotes apoptosis. Inhibits apoptosis when associated with the mitochondrial membrane by interference with BAX-dependent release of cytochrome c into the cytoplasm. Plays a role in the regulation of cell proliferation. An intracellular form suppresses stress-induced apoptosis by stabilizing mitochondrial membrane integrity through interaction with HSPA5. Secreted form does not affect caspase or BAX-mediated intrinsic apoptosis and TNF-induced NF-kappa-B-activity. Secreted form act as an important modulator during neuronal differentiation through interaction with STMN3. Plays a role in the clearance of immune complexes that arise during cell injury. The chain is Clusterin (CLU) from Equus caballus (Horse).